The following is a 109-amino-acid chain: Cell division suppressor protein YneA (109 aa).

A LysM domain is found at 40-94 (STVTITKGDTLWELSNKYHNHHHLTTNEFVKWVEDVNDLNSDTAQSLSPGDKLYI).

Belongs to the YneA family.

It is found in the cytoplasm. Its function is as follows. Inhibits cell division during the SOS response. Affects a later stage of the cell division protein assembly, after the assembly of the Z ring, by probably suppressing recruitment of FtsL and/or DivIC to the division machinery. The polypeptide is Cell division suppressor protein YneA (Priestia megaterium (strain DSM 319 / IMG 1521) (Bacillus megaterium)).